The chain runs to 385 residues: Meiotic recombination protein SPO11-2 (385 aa).

The Topo IIA-type catalytic domain occupies 24-169 (LPPAEVRARI…LGIMASSRGA (146 aa)). The active-site O-(5'-phospho-DNA)-tyrosine intermediate is tyrosine 126. Residues glutamate 219 and aspartate 272 each coordinate Mg(2+).

Belongs to the TOP6A family. As to quaternary structure, interacts with TOP6B. Requires Mg(2+) as cofactor. Highly expressed in flowers before pollination. Expressed in roots and shoots.

It is found in the nucleus. The catalysed reaction is ATP-dependent breakage, passage and rejoining of double-stranded DNA.. Functionally, required for meiotic recombination. Mediates DNA cleavage that forms the double-strand breaks (DSB) that initiate meiotic recombination. This Oryza sativa subsp. indica (Rice) protein is Meiotic recombination protein SPO11-2 (SPO11-2).